The primary structure comprises 195 residues: Envelope glycoprotein L (195 aa).

A signal peptide spans 1-25 (MKIYRVLVHLSFVLGMFTKTNTVLA). Positions 28–157 (KYDLVHGFMR…LIAPADISCY (130 aa)) are interaction with gH. In terms of domain architecture, gL alphaherpesvirus-type spans 28 to 195 (KYDLVHGFMR…TTSGSRRANA (168 aa)). Disulfide bonds link Cys49–Cys78 and Cys156–Cys178.

It belongs to the herpesviridae glycoprotein L (gL) family. Alphaherpesvirinae gL subfamily. Interacts with glycoprotein H (gH); this interaction is necessary for the correct processing and cell surface expression of gH. The heterodimer gH/gL seems to interact with gB trimers during fusion.

The protein resides in the virion membrane. It is found in the host cell membrane. It localises to the host Golgi apparatus. The protein localises to the host trans-Golgi network. In terms of biological role, the heterodimer glycoprotein H-glycoprotein L is required for the fusion of viral and plasma membranes leading to virus entry into the host cell. Acts as a functional inhibitor of gH and maintains gH in an inhibited form. Upon binding to host integrins, gL dissociates from gH leading to activation of the viral fusion glycoproteins gB and gH. The polypeptide is Envelope glycoprotein L (Gallus gallus (Chicken)).